Consider the following 299-residue polypeptide: Probable lipid kinase YegS (299 aa).

In terms of domain architecture, DAGKc spans 2-133; the sequence is ANFPASLLIL…IDMAMVNDKT (132 aa). ATP contacts are provided by residues Thr40, 66–72, and Thr95; that span reads GDGTINE. Positions 215, 218, and 220 each coordinate Mg(2+). The Proton acceptor role is filled by Glu271.

This sequence belongs to the diacylglycerol/lipid kinase family. YegS lipid kinase subfamily. The cofactor is Mg(2+). Ca(2+) serves as cofactor.

The protein localises to the cytoplasm. Functionally, probably phosphorylates lipids; the in vivo substrate is unknown. The protein is Probable lipid kinase YegS of Salmonella choleraesuis (strain SC-B67).